Here is a 534-residue protein sequence, read N- to C-terminus: NAD(P)H-quinone oxidoreductase subunit 2 (534 aa).

Helical transmembrane passes span 15-35 (ILPEGIVILTLLGVLIVDLIL), 42-62 (WIGYLAIAGLFTSIVALYFQW), 79-99 (LSIVFRGIIALSAAVTILMSI), 109-129 (LAEFIAILLSATLGGMFLSGA), 132-152 (LVMIFISLETLSISSYLLTGY), 167-187 (LLIGASSTAVFLYGVSLLYGL), 210-230 (LGLVIALVFAIAGIGFKISAA), 244-264 (PTPVIAFLSVGSKAAGFALAI), 280-300 (FVFTALAVLSMILGNVVALAQ), 306-326 (MLAYSSIAQAGFVMIGLIAGT), 334-354 (IFYLLVYLFMNLCGFTCIILF), 378-398 (LGLSIALLSLGGIPPLAGFFG), 410-432 (GLYWLVLLGLVTTVVSIYYYIRV), and 466-486 (VGLVITLIATSLAGILSNPLF).

It belongs to the complex I subunit 2 family. In terms of assembly, NDH-1 can be composed of about 15 different subunits; different subcomplexes with different compositions have been identified which probably have different functions.

The protein localises to the cellular thylakoid membrane. It carries out the reaction a plastoquinone + NADH + (n+1) H(+)(in) = a plastoquinol + NAD(+) + n H(+)(out). It catalyses the reaction a plastoquinone + NADPH + (n+1) H(+)(in) = a plastoquinol + NADP(+) + n H(+)(out). In terms of biological role, NDH-1 shuttles electrons from an unknown electron donor, via FMN and iron-sulfur (Fe-S) centers, to quinones in the respiratory and/or the photosynthetic chain. The immediate electron acceptor for the enzyme in this species is believed to be plastoquinone. Couples the redox reaction to proton translocation, and thus conserves the redox energy in a proton gradient. Cyanobacterial NDH-1 also plays a role in inorganic carbon-concentration. In Nostoc punctiforme (strain ATCC 29133 / PCC 73102), this protein is NAD(P)H-quinone oxidoreductase subunit 2.